Here is a 581-residue protein sequence, read N- to C-terminus: Protein FAM83D (581 aa).

The interval 1–297 (MALRYDGLDE…LYAQSKPISS (297 aa)) is DUF1669. The disordered stretch occupies residues 75–101 (PGEEGAAAGAEDSFGSSHDCSSGTYFP). A compositionally biased stretch (polar residues) spans 88 to 98 (FGSSHDCSSGT). Ser-296 bears the Phosphoserine mark. Residues 338–581 (TPRKVELGGE…REIMLYPSYQ (244 aa)) are required for interaction with KIF22 and function in chromosome congression. Disordered stretches follow at residues 366–401 (EDYF…MSDV) and 426–503 (QTVV…GPPK). Basic and acidic residues predominate over residues 369 to 382 (FSSRKDRLEGRRVT). Low complexity predominate over residues 426–438 (QTVVPTTSATTQT). Ser-456 carries the post-translational modification Phosphoserine. Residues 462–488 (SVSRSSSLRSSSSLSSQGSVASSIGSQ) show a composition bias toward low complexity. Thr-507 carries the post-translational modification Phosphothreonine.

It belongs to the FAM83 family. In terms of assembly, interacts with FBXW7; promotes FBXW7 degradation. May interact with RAF1. Interacts with KIF22; recruits KIF22 to mitotic spindle microtubules. Interacts (via C-terminus) with DYNLL1. Interacts with HMMR. Directly interacts (via DUF1669) with CSNK1A1 and CSNK1A1L. Phosphorylated during mitosis.

Its subcellular location is the cytoplasm. The protein localises to the cytoskeleton. It is found in the spindle. The protein resides in the spindle pole. Through the degradation of FBXW7, may act indirectly on the expression and downstream signaling of MTOR, JUN and MYC. May play also a role in cell proliferation through activation of the ERK1/ERK2 signaling cascade. May also be important for proper chromosome congression and alignment during mitosis through its interaction with KIF22. In Bos taurus (Bovine), this protein is Protein FAM83D.